Consider the following 1159-residue polypeptide: Caspase recruitment domain-containing protein 11 (1159 aa).

The CARD domain maps to 18-110 (EEEALWDNVE…ELYKLVTGKE (93 aa)). The interval 111–128 (PTRRFSTIVVEEGHEGLT) is linker. The stretch at 176 to 449 (FQERYYKMKE…KDNGSLDQSL (274 aa)) forms a coiled coil. Residues 441–496 (DNGSLDQSLPRHLPATIISQNLGDTSPRTNGQEADDSSTSEESPEDSKYFLPYHPP) are disordered. A phosphoserine mark is found at serine 448 and serine 466. The tract at residues 450-671 (PRHLPATIIS…GHVRGTGPLV (222 aa)) is inhibitory domain (ID). Over residues 457-472 (IISQNLGDTSPRTNGQ) the composition is skewed to polar residues. Over residues 473–484 (EADDSSTSEESP) the composition is skewed to acidic residues. Serine 512 and serine 540 each carry phosphoserine. The segment at 532–578 (HEEDFTDGSPSSSRSLPVTSSFSKMQPHRSRSSIMSITAEPPGNDSI) is disordered. The segment covering 540 to 554 (SPSSSRSLPVTSSFS) has biased composition (low complexity). A Phosphoserine; by PKC/PRKCB and PKC/PRKCQ modification is found at serine 564. Phosphoserine is present on serine 598. The disordered stretch occupies residues 610 to 631 (NHERYSFGPPSIHSSSSSHQSE). Low complexity predominate over residues 620 to 630 (SIHSSSSSHQS). Serine 649 and serine 657 each carry phosphoserine; by PKC/PRKCB and PKC/PRKCQ. The 89-residue stretch at 672–760 (QHTTLNGDGL…LITLHYKVNH (89 aa)) folds into the PDZ domain. Serine 891 and serine 930 each carry phosphoserine. The region spanning 978–1145 (RRRPVLFTPT…LLRVLKDKIV (168 aa)) is the Guanylate kinase-like domain.

As to quaternary structure, homodimer; disulfide-linked. Homomultimer; polymerizes following activation, forming a nucleating helical template that seeds BCL10-filament formation via a CARD-CARD interaction. Interacts (via CARD domain) with BCL10 (via CARD domain); interaction takes place following CARD11 activation and polymerization, leading to the formation of a filamentous CBM complex assembly. Component of a CBM complex (CARD11-BCL10-MALT1) complex involved in NF-kappa-B activation. Found in a membrane raft complex, at least composed of BCL10, CARD11, DPP4 and IKBKB. Interacts (via PDZ domain) with DPP4 (via cytoplasmic tail). Phosphorylation at Ser-564, Ser-649 and Ser-657 by PRKCB and PRKCQ leads to a shift from an inactive to an active form that activates the NF-kappa-B signaling.

The protein resides in the cytoplasm. It localises to the membrane raft. Maintained in an autoinhibited state via homodimerization in which the CARD domain forms an extensive interaction with the adjacent linker and coiled-coil regions. Activation downstream of T-cell receptor (TCR) by phosphorylation by PRKCB and PRKCQ triggers CARD11 homooligomerization and BCL10 recruitment, followed by activation of NF-kappa-B. Its function is as follows. Adapter protein that plays a key role in adaptive immune response by transducing the activation of NF-kappa-B downstream of T-cell receptor (TCR) and B-cell receptor (BCR) engagement. Transduces signals downstream TCR or BCR activation via the formation of a multiprotein complex together with BCL10 and MALT1 that induces NF-kappa-B and MAP kinase p38 (MAPK11, MAPK12, MAPK13 and/or MAPK14) pathways. Upon activation in response to TCR or BCR triggering, CARD11 homooligomerizes to form a nucleating helical template that recruits BCL10 via CARD-CARD interaction, thereby promoting polymerization of BCL10 and subsequent recruitment of MALT1: this leads to I-kappa-B kinase (IKK) phosphorylation and degradation, and release of NF-kappa-B proteins for nuclear translocation. Its binding to DPP4 induces T-cell proliferation and NF-kappa-B activation in a T-cell receptor/CD3-dependent manner. Promotes linear ubiquitination of BCL10 by promoting the targeting of BCL10 to RNF31/HOIP. Stimulates the phosphorylation of BCL10. Also activates the TORC1 signaling pathway. The polypeptide is Caspase recruitment domain-containing protein 11 (Mus musculus (Mouse)).